Reading from the N-terminus, the 89-residue chain is Myrmicitoxin(1)-Pr2a (89 aa).

An N-terminal signal peptide occupies residues 1 to 23 (MEIPKLLYIAVIAIGLSGSLTCA). Positions 24–61 (TPLANPWADPEAEANPEAKAIAEATAEAIAEALAEPEP) are excised as a propeptide. Asn88 carries the post-translational modification Asparagine amide.

Belongs to the formicidae venom clade 1 family. Expressed by the venom gland.

It is found in the secreted. In terms of biological role, vertebrate-selective toxin that causes pain by targeting voltage-gated sodium channels. The polypeptide is Myrmicitoxin(1)-Pr2a (Pogonomyrmex rugosus (Desert harvester ant)).